The chain runs to 180 residues: NAD(P)H-quinone oxidoreductase subunit I, chloroplastic (180 aa).

4Fe-4S ferredoxin-type domains are found at residues 55–84 (GRIHFEFDKCIACEVCVRVCPIDLPVVDWR) and 95–124 (LNYSIDFGICIFCGNCVEYCPTNCLSMTEE). [4Fe-4S] cluster-binding residues include Cys-64, Cys-67, Cys-70, Cys-74, Cys-104, Cys-107, Cys-110, and Cys-114.

Belongs to the complex I 23 kDa subunit family. NDH is composed of at least 16 different subunits, 5 of which are encoded in the nucleus. Requires [4Fe-4S] cluster as cofactor.

Its subcellular location is the plastid. The protein localises to the chloroplast thylakoid membrane. It carries out the reaction a plastoquinone + NADH + (n+1) H(+)(in) = a plastoquinol + NAD(+) + n H(+)(out). The enzyme catalyses a plastoquinone + NADPH + (n+1) H(+)(in) = a plastoquinol + NADP(+) + n H(+)(out). Its function is as follows. NDH shuttles electrons from NAD(P)H:plastoquinone, via FMN and iron-sulfur (Fe-S) centers, to quinones in the photosynthetic chain and possibly in a chloroplast respiratory chain. The immediate electron acceptor for the enzyme in this species is believed to be plastoquinone. Couples the redox reaction to proton translocation, and thus conserves the redox energy in a proton gradient. This chain is NAD(P)H-quinone oxidoreductase subunit I, chloroplastic, found in Liriodendron tulipifera (Tuliptree).